We begin with the raw amino-acid sequence, 571 residues long: Gag-Pro polyprotein (571 aa).

A lipid anchor (N-myristoyl glycine; by host) is attached at glycine 2. Positions 100-103 (PPPY) match the PPXY motif motif. Repeats lie at residues 342–362 (PPGP…CPTK) and 367–387 (PPGP…CPTL). CCHC-type zinc fingers lie at residues 345 to 362 (PCYR…CPTK) and 370 to 387 (PCPI…CPTL). Residue threonine 453 is the Protease; shared with dimeric partner of the active site.

Homodimer; the homodimers are part of the immature particles. Interacts with human TSG101 and NEDD4; these interactions are essential for budding and release of viral particles. In terms of assembly, homodimer; further assembles as homohexamers. Specific enzymatic cleavages by the viral protease yield mature proteins. The polyprotein is cleaved during and after budding, this process is termed maturation. The protease is autoproteolytically processed at its N- and C-termini. In terms of processing, myristoylated. Myristoylation of the matrix (MA) domain mediates the transport and binding of Gag polyproteins to the host plasma membrane and is required for the assembly of viral particles.

It localises to the virion. In terms of biological role, the matrix domain targets Gag, Gag-Pro and Gag-Pro-Pol polyproteins to the plasma membrane via a multipartite membrane binding signal, that includes its myristoylated N-terminus. Its function is as follows. Matrix protein. Forms the spherical core of the virus that encapsulates the genomic RNA-nucleocapsid complex. Functionally, binds strongly to viral nucleic acids and promote their aggregation. Also destabilizes the nucleic acids duplexes via highly structured zinc-binding motifs. In terms of biological role, the aspartyl protease mediates proteolytic cleavages of Gag and Gag-Pol polyproteins during or shortly after the release of the virion from the plasma membrane. Cleavages take place as an ordered, step-wise cascade to yield mature proteins. This process is called maturation. Displays maximal activity during the budding process just prior to particle release from the cell. The chain is Gag-Pro polyprotein from Bovine leukemia virus (isolate Japanese BLV-1) (BLV).